Here is a 348-residue protein sequence, read N- to C-terminus: Erlin-1 (348 aa).

Residues 1–7 (MNMTQAR) lie on the Cytoplasmic side of the membrane. A helical membrane pass occupies residues 8-28 (LLVAAVVGLVAILLYASIHKI). Topologically, residues 29-348 (EEGHLAVYYR…SPIQNKENAG (320 aa)) are lumenal. The N-linked (GlcNAc...) asparagine glycan is linked to N108. Position 269 is an N6-acetyllysine (K269). Positions 318 to 336 (DGRTGREDSLPPEEAREPS) are enriched in basic and acidic residues. The segment at 318–348 (DGRTGREDSLPPEEAREPSGESPIQNKENAG) is disordered. A compositionally biased stretch (polar residues) spans 339-348 (SPIQNKENAG).

This sequence belongs to the band 7/mec-2 family. As to quaternary structure, forms a heteromeric complex with ERLIN2. In complex with ERLIN2, interacts with RNF170. Interacts with AMFR and SYVN1. Deubiquitinated by USP25; leading to stabilization.

Its subcellular location is the endoplasmic reticulum membrane. In terms of biological role, component of the ERLIN1/ERLIN2 complex which mediates the endoplasmic reticulum-associated degradation (ERAD) of inositol 1,4,5-trisphosphate receptors (IP3Rs). Involved in regulation of cellular cholesterol homeostasis by regulation the SREBP signaling pathway. Binds cholesterol and may promote ER retention of the SCAP-SREBF complex. The chain is Erlin-1 from Mus musculus (Mouse).